The chain runs to 332 residues: Casein kinase II subunit alpha (332 aa).

Residues 34–319 (YEVVRKVGRG…ALEAMTHPYF (286 aa)) enclose the Protein kinase domain. Residues 40-48 (VGRGKYSEV) and Lys63 contribute to the ATP site. The Proton acceptor role is filled by Asp151.

This sequence belongs to the protein kinase superfamily. Ser/Thr protein kinase family. CK2 subfamily. In terms of assembly, tetramer of two alpha and two beta chains (possible).

It catalyses the reaction L-seryl-[protein] + ATP = O-phospho-L-seryl-[protein] + ADP + H(+). It carries out the reaction L-threonyl-[protein] + ATP = O-phospho-L-threonyl-[protein] + ADP + H(+). In terms of biological role, casein kinases are operationally defined by their preferential utilization of acidic proteins such as caseins as substrates. The alpha chain contains the catalytic site. The protein is Casein kinase II subunit alpha (ACK2) of Zea mays (Maize).